Here is a 72-residue protein sequence, read N- to C-terminus: Prokaryotic ubiquitin-like protein Pup (72 aa).

Gly residues predominate over residues 1-10 (MATKDTGGGQ). The tract at residues 1–45 (MATKDTGGGQQKATRSTEEVEEQAQDAQASEDLAERQEKLSDDVD) is disordered. A coiled-coil region spans residues 10–60 (QQKATRSTEEVEEQAQDAQASEDLAERQEKLSDDVDSVLDEIDDVLEENAE). Residues 28–66 (QASEDLAERQEKLSDDVDSVLDEIDDVLEENAEDFVRSF) are ARC ATPase binding. Residues 33-42 (LAERQEKLSD) are compositionally biased toward basic and acidic residues. At Gln72 the chain carries Deamidated glutamine. Residue Gln72 forms an Isoglutamyl lysine isopeptide (Gln-Lys) (interchain with K-? in acceptor proteins) linkage.

It belongs to the prokaryotic ubiquitin-like protein family. As to quaternary structure, strongly interacts with the proteasome-associated ATPase ARC through a hydrophobic interface; the interacting region of Pup lies in its C-terminal half. There is one Pup binding site per ARC hexamer ring. Post-translationally, is modified by deamidation of its C-terminal glutamine to glutamate by the deamidase Dop, a prerequisite to the subsequent pupylation process.

Its pathway is protein degradation; proteasomal Pup-dependent pathway. Protein modifier that is covalently attached to lysine residues of substrate proteins, thereby targeting them for proteasomal degradation. The tagging system is termed pupylation. The chain is Prokaryotic ubiquitin-like protein Pup from Streptomyces griseus subsp. griseus (strain JCM 4626 / CBS 651.72 / NBRC 13350 / KCC S-0626 / ISP 5235).